The following is a 709-amino-acid chain: MENFDGKSMPPTPVPIGSSQFYRWMPHPIVDTPPSDATWRKPVPRGRIRDLVAAFDQCSGMLEQKPPPPPTQRVESLENEHIAPPPTSKSSKIPEILAKKSEKYISPYEKRHFHGRRGTQAVVFNSNNAQNAPNVGGAYPYGATPLKLRNLAQKMDKEELYVADDVGISKKSENFENSDDDVANFQELLVLDEVLENAENSENLESQQYDEESTLNRTFQDSGVPENQENLLQLPECPKTPKFTSSPTLFTPYAAGEPIVEYRCSSGSAGGPLKIVVKKLQAPIALATSTPKPAMCRPPKHSEPPPAFQDSFVSSISNWSAVDHHATDSRRQMNRLLNSIDETRHHILLAEHSLLEAQKSKCPMQELASQRVLLICRERLKVQLEEVRRLQAMTVVRHPPPPINRHFKSTMVISNISLQFNKHFHSRGSYAFLVLLKCRTEVEATGVVTLLAQFQTPQNFILFGEHLRFSNLPVDFTIGMEIYMMRVPEHRPPEKTCAAFLAQKVRNLLVPSNAAHRRPTTSTPQKSIQNATSPACDFQLCGNLTLDRDSSGDNRRFYLDDVIYPLEGTVKLNSHCTSLPDAIDMEYRGFLHILHDSASPLERAKKVPIWHKYWSLLHRGAILFWSTPQEEVHEKVPIFQIDLTKCTNNSIEESREMSQGAEHEFHIELLIDQDPDLIEKRRVILAAESSDHLNSWLSAINDTLDILRS.

The region spanning 584 to 705 is the PH domain; it reads DMEYRGFLHI…WLSAINDTLD (122 aa).

The sequence is that of Anillin-like protein 3 (ani-3) from Caenorhabditis elegans.